The following is an 86-amino-acid chain: Muscarinic toxin-like protein (86 aa).

An N-terminal signal peptide occupies residues 1–21; it reads MKTLLLTLAVVTMVCMDLGYT. Intrachain disulfides connect Cys24/Cys45, Cys38/Cys62, Cys66/Cys78, and Cys79/Cys84.

The protein belongs to the three-finger toxin family. Short-chain subfamily. Orphan group VIII (haditoxin) sub-subfamily. Homodimer; non-covalently linked. Expressed by the venom gland.

The protein localises to the secreted. Its function is as follows. Antagonist of muscle and neuronal nicotinic acetylcholine receptors (nAChR) with highest affinity for neuronal alpha-7/CHRNA7 nAChRs. This Bungarus multicinctus (Many-banded krait) protein is Muscarinic toxin-like protein.